A 625-amino-acid polypeptide reads, in one-letter code: tRNA uridine 5-carboxymethylaminomethyl modification enzyme MnmG (625 aa).

Position 14 to 19 (14 to 19 (GAGHAG)) interacts with FAD. 273-287 (GPRYCPSIEDKIVRF) contacts NAD(+).

Belongs to the MnmG family. As to quaternary structure, homodimer. Heterotetramer of two MnmE and two MnmG subunits. It depends on FAD as a cofactor.

It localises to the cytoplasm. In terms of biological role, NAD-binding protein involved in the addition of a carboxymethylaminomethyl (cmnm) group at the wobble position (U34) of certain tRNAs, forming tRNA-cmnm(5)s(2)U34. This is tRNA uridine 5-carboxymethylaminomethyl modification enzyme MnmG from Clostridium botulinum (strain Hall / ATCC 3502 / NCTC 13319 / Type A).